Reading from the N-terminus, the 380-residue chain is 1-deoxy-D-xylulose 5-phosphate reductoisomerase (380 aa).

The NADPH site is built by S10, G11, S12, I13, G36, K37, N38, and N120. K121 contributes to the 1-deoxy-D-xylulose 5-phosphate binding site. E122 serves as a coordination point for NADPH. D146 contacts Mn(2+). Positions 147, 148, 172, and 195 each coordinate 1-deoxy-D-xylulose 5-phosphate. E148 provides a ligand contact to Mn(2+). G201 lines the NADPH pocket. Residues S208, N213, K214, and E217 each contribute to the 1-deoxy-D-xylulose 5-phosphate site. Position 217 (E217) interacts with Mn(2+).

It belongs to the DXR family. Mg(2+) serves as cofactor. The cofactor is Mn(2+).

The catalysed reaction is 2-C-methyl-D-erythritol 4-phosphate + NADP(+) = 1-deoxy-D-xylulose 5-phosphate + NADPH + H(+). It participates in isoprenoid biosynthesis; isopentenyl diphosphate biosynthesis via DXP pathway; isopentenyl diphosphate from 1-deoxy-D-xylulose 5-phosphate: step 1/6. Catalyzes the NADPH-dependent rearrangement and reduction of 1-deoxy-D-xylulose-5-phosphate (DXP) to 2-C-methyl-D-erythritol 4-phosphate (MEP). This chain is 1-deoxy-D-xylulose 5-phosphate reductoisomerase, found in Bacillus cereus (strain Q1).